A 76-amino-acid polypeptide reads, in one-letter code: Conotoxin Cal29b (76 aa).

The signal sequence occupies residues 1-43 (MKLTCVLIVAVLILAACQFTAANMARYGKTQIARSDVKSIDAR).

The protein belongs to the conotoxin O1 superfamily. Post-translationally, may contain 4 disulfide bonds. As to expression, expressed by the venom duct.

The protein localises to the secreted. Is able to inhibit the growth of Mycobacterium tuberculosis (MIC=0.22-3.52 uM against strain H37Rv and 2 multidrug-resistant strains). May also show neurotoxic activity. This Californiconus californicus (California cone) protein is Conotoxin Cal29b.